An 86-amino-acid polypeptide reads, in one-letter code: Large ribosomal subunit protein uL23 (86 aa).

This sequence belongs to the universal ribosomal protein uL23 family. Part of the 50S ribosomal subunit. Contacts protein L29.

Binds to 23S rRNA. One of the proteins that surrounds the polypeptide exit tunnel on the outside of the ribosome. The protein is Large ribosomal subunit protein uL23 of Methanococcus maripaludis (strain C7 / ATCC BAA-1331).